We begin with the raw amino-acid sequence, 133 residues long: Holo-[acyl-carrier-protein] synthase (133 aa).

Residues aspartate 8 and glutamate 57 each coordinate Mg(2+).

The protein belongs to the P-Pant transferase superfamily. AcpS family. Mg(2+) is required as a cofactor.

The protein localises to the cytoplasm. It carries out the reaction apo-[ACP] + CoA = holo-[ACP] + adenosine 3',5'-bisphosphate + H(+). In terms of biological role, transfers the 4'-phosphopantetheine moiety from coenzyme A to a Ser of acyl-carrier-protein. This Caulobacter vibrioides (strain ATCC 19089 / CIP 103742 / CB 15) (Caulobacter crescentus) protein is Holo-[acyl-carrier-protein] synthase.